We begin with the raw amino-acid sequence, 64 residues long: Conotoxin VnMLCL-033 (64 aa).

The first 19 residues, M1–P19, serve as a signal peptide directing secretion. A propeptide spanning residues N20–D43 is cleaved from the precursor. I63 is subject to Isoleucine amide.

The protein belongs to the conotoxin T superfamily. Expressed by the venom duct.

The protein resides in the secreted. This chain is Conotoxin VnMLCL-033, found in Conus ventricosus (Mediterranean cone).